Consider the following 671-residue polypeptide: cGMP-dependent protein kinase 1 (671 aa).

At S2 the chain carries N-acetylserine. Residues 2–59 adopt a coiled-coil conformation; that stretch reads SELEEDFAKILMLKEERIKELEKRLSEKEEEIQELKRKLHKCQSVLPVPSTHIGPRTT. The tract at residues 2 to 102 is required for dimerization; that stretch reads SELEEDFAKI…LIKEAILDND (101 aa). The leucine-zipper stretch occupies residues 9–44; it reads AKILMLKEERIKELEKRLSEKEEEIQELKRKLHKCQ. Positions 50–75 are autoinhibitory domain; the sequence is PSTHIGPRTTRAQGISAEPQTYRSFH. Residue T59 is modified to Phosphothreonine; by autocatalysis. The cGMP-binding, high affinity stretch occupies residues 103–220; that stretch reads FMKNLELSQI…EYMEFLKSVP (118 aa). 3',5'-cyclic GMP-binding positions include 167 to 170, 177 to 178, R282, 291 to 294, 301 to 302, and Y336; these read GELA, RT, and GEKA. A cGMP-binding, low affinity region spans residues 221–341; it reads TFQSLPDEIL…SNKAYEDAEA (121 aa). In terms of domain architecture, Protein kinase spans 360 to 619; the sequence is FNIIDTLGVG…VKDIQKHKWF (260 aa). ATP is bound by residues 366–374 and K390; that span reads LGVGGFGRV. Catalysis depends on D484, which acts as the Proton acceptor. Phosphothreonine is present on T515. Residues 620–671 enclose the AGC-kinase C-terminal domain; the sequence is EGFNWEGLRKGTLTPPIIPSVASPTDTSNFDSFPEDSDEPPPDDNSGWDIDF. Residues 635 to 671 are disordered; that stretch reads PIIPSVASPTDTSNFDSFPEDSDEPPPDDNSGWDIDF. The span at 652–661 shows a compositional bias: acidic residues; it reads FPEDSDEPPP.

It belongs to the protein kinase superfamily. AGC Ser/Thr protein kinase family. cGMP subfamily. As to quaternary structure, isoform alpha: parallel homodimer or heterodimer and also heterotetramer. Interacts directly with PPP1R12A. Non-covalent dimer of dimer of PRKG1-PRKG1 and PPP1R12A-PPP1R12A. This interaction targets PRKG1 to stress fibers to mediate smooth muscle cell relaxation and vasodilation in responses to rises in cGMP. Isoform beta: antiparallel homodimer. Part of cGMP kinase signaling complex at least composed of ACTA2/alpha-actin, CNN1/calponin H1, PLN/phospholamban, PRKG1 and ITPR1. Interacts with IRAG1. Forms a stable complex with ITPR1, IRAG1, and isoform beta of PRKG1. Interacts with TRPC7 (via ankyrin repeat domain). Isoform alpha interacts with RGS2. Interacts with GTF2I. In terms of processing, autophosphorylation increases kinase activity. 65 kDa monomer is produced by proteolytic cleavage. Detected in cerebellum, hippocampus, dorsomedial hypothalamus, medulla, subcommissural organ, cerebral cortex, amygdala, habenulae, various hypothalamic regions, olfactory bulb, pituitary gland, and retina. Isoform alpha is prominent in the cerebellum and medulla, whereas isoform Beta is predominant in the cortex, hippocampus, hypothalamus, and olfactory bulb.

It is found in the cytoplasm. The catalysed reaction is L-seryl-[protein] + ATP = O-phospho-L-seryl-[protein] + ADP + H(+). It catalyses the reaction L-threonyl-[protein] + ATP = O-phospho-L-threonyl-[protein] + ADP + H(+). Its activity is regulated as follows. In the absence of cGMP, PRKG1 activity is suppressed by autoinhibitory contacts. Serine/threonine protein kinase that acts as a key mediator of the nitric oxide (NO)/cGMP signaling pathway. GMP binding activates PRKG1, which phosphorylates serines and threonines on many cellular proteins. Numerous protein targets for PRKG1 phosphorylation are implicated in modulating cellular calcium, but the contribution of each of these targets may vary substantially among cell types. Proteins that are phosphorylated by PRKG1 regulate platelet activation and adhesion, smooth muscle contraction, cardiac function, gene expression, feedback of the NO-signaling pathway, and other processes involved in several aspects of the CNS like axon guidance, hippocampal and cerebellar learning, circadian rhythm and nociception. Smooth muscle relaxation is mediated through lowering of intracellular free calcium, by desensitization of contractile proteins to calcium, and by decrease in the contractile state of smooth muscle or in platelet activation. Regulates intracellular calcium levels via several pathways: phosphorylates IRAG1 and inhibits IP3-induced Ca(2+) release from intracellular stores, phosphorylation of KCNMA1 (BKCa) channels decreases intracellular Ca(2+) levels, which leads to increased opening of this channel. PRKG1 phosphorylates the canonical transient receptor potential channel (TRPC) family which inactivates the associated inward calcium current. Another mode of action of NO/cGMP/PKGI signaling involves PKGI-mediated inactivation of the Ras homolog gene family member A (RhoA). Phosphorylation of RHOA by PRKG1 blocks the action of this protein in myriad processes: regulation of RHOA translocation; decreasing contraction; controlling vesicle trafficking, reduction of myosin light chain phosphorylation resulting in vasorelaxation. Activation of PRKG1 by NO signaling also alters gene expression in a number of tissues. In smooth muscle cells, increased cGMP and PRKG1 activity influence expression of smooth muscle-specific contractile proteins, levels of proteins in the NO/cGMP signaling pathway, down-regulation of the matrix proteins osteopontin and thrombospondin-1 to limit smooth muscle cell migration and phenotype. Regulates vasodilator-stimulated phosphoprotein (VASP) functions in platelets and smooth muscle. The chain is cGMP-dependent protein kinase 1 (Prkg1) from Mus musculus (Mouse).